Reading from the N-terminus, the 599-residue chain is Elongation factor 4 (599 aa).

The tr-type G domain occupies lysine 2–glutamate 184. Residues aspartate 14 to threonine 19 and asparagine 131 to aspartate 134 contribute to the GTP site.

Belongs to the TRAFAC class translation factor GTPase superfamily. Classic translation factor GTPase family. LepA subfamily.

It localises to the cell inner membrane. The enzyme catalyses GTP + H2O = GDP + phosphate + H(+). Required for accurate and efficient protein synthesis under certain stress conditions. May act as a fidelity factor of the translation reaction, by catalyzing a one-codon backward translocation of tRNAs on improperly translocated ribosomes. Back-translocation proceeds from a post-translocation (POST) complex to a pre-translocation (PRE) complex, thus giving elongation factor G a second chance to translocate the tRNAs correctly. Binds to ribosomes in a GTP-dependent manner. This is Elongation factor 4 from Cronobacter sakazakii (strain ATCC BAA-894) (Enterobacter sakazakii).